Here is a 339-residue protein sequence, read N- to C-terminus: Diacylglycerol acyltransferase/mycolyltransferase Ag85A (339 aa).

Residues 1-43 form the signal peptide; it reads MKLVDRFRGAVTGMPRRLMVGAVGAALLSGLVGFVGGSATASA. Position 85 to 86 (85 to 86) interacts with substrate; that stretch reads MR. Positions 101–111 are fibronectin-binding; it reads FEWYNQSGISV. A disulfide bond links Cys-130 and Cys-135. 2 residues coordinate substrate: Ser-169 and Asp-197. Catalysis depends on Ser-169, which acts as the Nucleophile. The active site involves Glu-272. Substrate is bound by residues 274–277, Lys-281, and 304–306; these read FVRT and HDW. The active site involves His-304.

Belongs to the mycobacterial A85 antigen family. Homodimer.

It is found in the secreted. Its subcellular location is the cell wall. The protein resides in the cytoplasm. It carries out the reaction an acyl-CoA + a 1,2-diacyl-sn-glycerol = a triacyl-sn-glycerol + CoA. It catalyses the reaction 2 alpha,alpha'-trehalose 6-mycolate = alpha,alpha'-trehalose 6,6'-bismycolate + alpha,alpha-trehalose. Functionally, the antigen 85 proteins (FbpA, FbpB, FbpC) are responsible for the high affinity of mycobacteria for fibronectin, a large adhesive glycoprotein, which facilitates the attachment of M.tuberculosis to murine alveolar macrophages (AMs). They also help to maintain the integrity of the cell wall by catalyzing the transfer of mycolic acids to cell wall arabinogalactan, and through the synthesis of alpha,alpha-trehalose dimycolate (TDM, cord factor). They catalyze the transfer of a mycoloyl residue from one molecule of alpha,alpha-trehalose monomycolate (TMM) to another TMM, leading to the formation of TDM. FbpA mediates triacylglycerol (TAG) formation with long-chain acyl-CoA as the acyl donor and 1,2-dipalmitoyl-sn-glycerol (1,2-dipalmitin) as the acyl acceptor. It has a preference for C26:0-CoA over C18:1-CoA. This chain is Diacylglycerol acyltransferase/mycolyltransferase Ag85A (fbpA), found in Mycobacterium gordonae.